The primary structure comprises 325 residues: Syntaxin-16 (325 aa).

The Cytoplasmic portion of the chain corresponds to 1 to 301; that stretch reads MATRRLTDAF…AEQYQKKNRK (301 aa). Ser-41 is subject to Phosphoserine. One can recognise a t-SNARE coiled-coil homology domain in the interval 230–292; it reads TLMVEERERE…EDGLKQLHKA (63 aa). The helical; Anchor for type IV membrane protein transmembrane segment at 302 to 322 threads the bilayer; it reads MLVILILFVIIIVLIVVLVGV. Residues 323 to 325 lie on the Vesicular side of the membrane; it reads KSR.

The protein belongs to the syntaxin family. As to quaternary structure, interacts with GCC2. Interacts with BAIAP3; this interaction is increased in the presence of calcium. As to expression, ubiquitous.

Its subcellular location is the golgi apparatus membrane. The protein localises to the cytoplasm. SNARE involved in vesicular transport from the late endosomes to the trans-Golgi network. This chain is Syntaxin-16 (STX16), found in Homo sapiens (Human).